The sequence spans 762 residues: Phosphoribosylformylglycinamidine synthase subunit PurL (762 aa).

The active site involves His58. ATP-binding residues include Tyr61 and Lys105. Position 107 (Glu107) interacts with Mg(2+). Residues 108 to 111 and Arg130 contribute to the substrate site; that span reads SHNH. His109 functions as the Proton acceptor in the catalytic mechanism. Asp131 contacts Mg(2+). Gln260 is a substrate binding site. Residue Asp288 participates in Mg(2+) binding. 332-334 is a binding site for substrate; it reads ESQ. Asn520 and Gly557 together coordinate ATP. Asn558 provides a ligand contact to Mg(2+). A substrate-binding site is contributed by Ser560.

Belongs to the FGAMS family. As to quaternary structure, monomer. Part of the FGAM synthase complex composed of 1 PurL, 1 PurQ and 2 PurS subunits.

The protein localises to the cytoplasm. It carries out the reaction N(2)-formyl-N(1)-(5-phospho-beta-D-ribosyl)glycinamide + L-glutamine + ATP + H2O = 2-formamido-N(1)-(5-O-phospho-beta-D-ribosyl)acetamidine + L-glutamate + ADP + phosphate + H(+). It functions in the pathway purine metabolism; IMP biosynthesis via de novo pathway; 5-amino-1-(5-phospho-D-ribosyl)imidazole from N(2)-formyl-N(1)-(5-phospho-D-ribosyl)glycinamide: step 1/2. Functionally, part of the phosphoribosylformylglycinamidine synthase complex involved in the purines biosynthetic pathway. Catalyzes the ATP-dependent conversion of formylglycinamide ribonucleotide (FGAR) and glutamine to yield formylglycinamidine ribonucleotide (FGAM) and glutamate. The FGAM synthase complex is composed of three subunits. PurQ produces an ammonia molecule by converting glutamine to glutamate. PurL transfers the ammonia molecule to FGAR to form FGAM in an ATP-dependent manner. PurS interacts with PurQ and PurL and is thought to assist in the transfer of the ammonia molecule from PurQ to PurL. The chain is Phosphoribosylformylglycinamidine synthase subunit PurL from Rhodococcus erythropolis (strain PR4 / NBRC 100887).